The sequence spans 304 residues: D-alanine--D-alanine ligase (304 aa).

The region spanning 103–299 (KLIWQALGLP…FADLCIEILK (197 aa)) is the ATP-grasp domain. 129-184 (EEKLGLPMFVKPAAEGSSVGVVKVKGKGRLKSVYEELKHFQGEIIAERFIGGGEYS) lines the ATP pocket. Mg(2+)-binding residues include Asp253, Glu266, and Asn268.

Belongs to the D-alanine--D-alanine ligase family. It depends on Mg(2+) as a cofactor. Mn(2+) serves as cofactor.

The protein resides in the cytoplasm. It catalyses the reaction 2 D-alanine + ATP = D-alanyl-D-alanine + ADP + phosphate + H(+). It participates in cell wall biogenesis; peptidoglycan biosynthesis. Functionally, cell wall formation. The protein is D-alanine--D-alanine ligase of Neisseria meningitidis serogroup A / serotype 4A (strain DSM 15465 / Z2491).